A 90-amino-acid chain; its full sequence is Probable Fe(2+)-trafficking protein (90 aa).

It belongs to the Fe(2+)-trafficking protein family.

Functionally, could be a mediator in iron transactions between iron acquisition and iron-requiring processes, such as synthesis and/or repair of Fe-S clusters in biosynthetic enzymes. This is Probable Fe(2+)-trafficking protein from Pseudomonas syringae pv. tomato (strain ATCC BAA-871 / DC3000).